Here is a 125-residue protein sequence, read N- to C-terminus: Phosphoribosyl-AMP cyclohydrolase (125 aa).

Asp-86 serves as a coordination point for Mg(2+). Cys-87 is a binding site for Zn(2+). Mg(2+) contacts are provided by Asp-88 and Asp-90. Zn(2+)-binding residues include Cys-103 and Cys-110.

This sequence belongs to the PRA-CH family. Homodimer. It depends on Mg(2+) as a cofactor. Zn(2+) serves as cofactor.

The protein localises to the cytoplasm. It carries out the reaction 1-(5-phospho-beta-D-ribosyl)-5'-AMP + H2O = 1-(5-phospho-beta-D-ribosyl)-5-[(5-phospho-beta-D-ribosylamino)methylideneamino]imidazole-4-carboxamide. Its pathway is amino-acid biosynthesis; L-histidine biosynthesis; L-histidine from 5-phospho-alpha-D-ribose 1-diphosphate: step 3/9. Its function is as follows. Catalyzes the hydrolysis of the adenine ring of phosphoribosyl-AMP. In Erythrobacter litoralis (strain HTCC2594), this protein is Phosphoribosyl-AMP cyclohydrolase.